The sequence spans 239 residues: MSLLEYISDEDLFNEVETLLTKAKKKKDAAEKTFTSNVIDPFGALFEAPGFSSHEEWRNSELARQQQKTIQNHVGTFHQKILGHVEGWRDMGIGGIVDLLNEERRIIAEVKNKYSTVTGGDLADKYKGLDELVSPKHSRFKDYCAYFVNIIPRKPTRYNSPFTPSNKGSGTLCPSNPNIRIIDGASFYELVTGRPDALQELHSALPHAIEYILSERLGQQGFSIPDKDSFIKYFGLAYG.

It catalyses the reaction Endonucleolytic cleavage of DNA to give specific double-stranded fragments with terminal 5'-phosphates.. A P subtype restriction enzyme that recognizes the double-stranded sequence 5'-GGNCC-3'; the cleavage site is unknown. The sequence is that of Type II restriction enzyme Eco47II from Escherichia coli.